Here is a 123-residue protein sequence, read N- to C-terminus: Small ribosomal subunit protein uS13 (123 aa).

Residues His-93–Lys-123 are disordered. The span at Ala-108–Lys-123 shows a compositional bias: basic residues.

Belongs to the universal ribosomal protein uS13 family. In terms of assembly, part of the 30S ribosomal subunit. Forms a loose heterodimer with protein S19. Forms two bridges to the 50S subunit in the 70S ribosome.

Its function is as follows. Located at the top of the head of the 30S subunit, it contacts several helices of the 16S rRNA. In the 70S ribosome it contacts the 23S rRNA (bridge B1a) and protein L5 of the 50S subunit (bridge B1b), connecting the 2 subunits; these bridges are implicated in subunit movement. Contacts the tRNAs in the A and P-sites. The polypeptide is Small ribosomal subunit protein uS13 (Leuconostoc citreum (strain KM20)).